Consider the following 695-residue polypeptide: Elongation factor G (695 aa).

Residues 10–285 enclose the tr-type G domain; the sequence is AKTRNIGIMA…AVIDYLPSPI (276 aa). GTP is bound by residues 19–26, 83–87, and 137–140; these read AHIDAGKT, DTPGH, and NKMD.

This sequence belongs to the TRAFAC class translation factor GTPase superfamily. Classic translation factor GTPase family. EF-G/EF-2 subfamily.

The protein resides in the cytoplasm. In terms of biological role, catalyzes the GTP-dependent ribosomal translocation step during translation elongation. During this step, the ribosome changes from the pre-translocational (PRE) to the post-translocational (POST) state as the newly formed A-site-bound peptidyl-tRNA and P-site-bound deacylated tRNA move to the P and E sites, respectively. Catalyzes the coordinated movement of the two tRNA molecules, the mRNA and conformational changes in the ribosome. The polypeptide is Elongation factor G (Limosilactobacillus reuteri (strain DSM 20016) (Lactobacillus reuteri)).